A 146-amino-acid chain; its full sequence is Large ribosomal subunit protein uL15 (146 aa).

Residues 1-54 are disordered; the sequence is MTIKLHDLRPAPGSKTPRTRVGRGEGSKGKTAGRGTKGTKARKQVPTTFEGGQM.

The protein belongs to the universal ribosomal protein uL15 family. Part of the 50S ribosomal subunit.

Functionally, binds to the 23S rRNA. The polypeptide is Large ribosomal subunit protein uL15 (Mycobacterium marinum (strain ATCC BAA-535 / M)).